A 200-amino-acid polypeptide reads, in one-letter code: FMN-dependent NADH:quinone oxidoreductase 2 (200 aa).

Position 135-138 (135-138) interacts with FMN; sequence SRGG.

It belongs to the azoreductase type 1 family. Homodimer. The cofactor is FMN.

The catalysed reaction is 2 a quinone + NADH + H(+) = 2 a 1,4-benzosemiquinone + NAD(+). It catalyses the reaction N,N-dimethyl-1,4-phenylenediamine + anthranilate + 2 NAD(+) = 2-(4-dimethylaminophenyl)diazenylbenzoate + 2 NADH + 2 H(+). In terms of biological role, quinone reductase that provides resistance to thiol-specific stress caused by electrophilic quinones. Also exhibits azoreductase activity. Catalyzes the reductive cleavage of the azo bond in aromatic azo compounds to the corresponding amines. This chain is FMN-dependent NADH:quinone oxidoreductase 2, found in Clostridium acetobutylicum (strain ATCC 824 / DSM 792 / JCM 1419 / IAM 19013 / LMG 5710 / NBRC 13948 / NRRL B-527 / VKM B-1787 / 2291 / W).